Here is a 302-residue protein sequence, read N- to C-terminus: tRNA dimethylallyltransferase (302 aa).

10 to 17 (GPTATGKS) provides a ligand contact to ATP. 12–17 (TATGKS) contributes to the substrate binding site. Positions 35–38 (DSRQ) are interaction with substrate tRNA.

The protein belongs to the IPP transferase family. As to quaternary structure, monomer. It depends on Mg(2+) as a cofactor.

The catalysed reaction is adenosine(37) in tRNA + dimethylallyl diphosphate = N(6)-dimethylallyladenosine(37) in tRNA + diphosphate. In terms of biological role, catalyzes the transfer of a dimethylallyl group onto the adenine at position 37 in tRNAs that read codons beginning with uridine, leading to the formation of N6-(dimethylallyl)adenosine (i(6)A). This Acaryochloris marina (strain MBIC 11017) protein is tRNA dimethylallyltransferase.